Here is a 332-residue protein sequence, read N- to C-terminus: Probable allantoicase (332 aa).

It belongs to the allantoicase family.

It catalyses the reaction allantoate + H2O = (S)-ureidoglycolate + urea. Its pathway is nitrogen metabolism; (S)-allantoin degradation; (S)-ureidoglycolate from allantoate (aminidohydrolase route): step 1/1. The protein is Probable allantoicase of Pseudomonas paraeruginosa (strain DSM 24068 / PA7) (Pseudomonas aeruginosa (strain PA7)).